A 273-amino-acid polypeptide reads, in one-letter code: Type III pantothenate kinase (273 aa).

5–12 contacts ATP; it reads DVGNSHVV. 112-115 contacts substrate; sequence GTDL. The active-site Proton acceptor is the aspartate 114. Aspartate 134 is a K(+) binding site. An ATP-binding site is contributed by threonine 137. Threonine 189 serves as a coordination point for substrate.

Belongs to the type III pantothenate kinase family. As to quaternary structure, homodimer. Requires NH4(+) as cofactor. The cofactor is K(+).

It is found in the cytoplasm. The catalysed reaction is (R)-pantothenate + ATP = (R)-4'-phosphopantothenate + ADP + H(+). It participates in cofactor biosynthesis; coenzyme A biosynthesis; CoA from (R)-pantothenate: step 1/5. In terms of biological role, catalyzes the phosphorylation of pantothenate (Pan), the first step in CoA biosynthesis. The sequence is that of Type III pantothenate kinase from Treponema pallidum subsp. pallidum (strain SS14).